We begin with the raw amino-acid sequence, 61 residues long: Small ribosomal subunit protein eS31 (61 aa).

Zn(2+)-binding residues include C22, C25, C38, and C41. A C4-type zinc finger spans residues 22-41 (CPRCGSFMAEHKDRYHCGKC).

The protein belongs to the eukaryotic ribosomal protein eS31 family. In terms of assembly, part of the 30S ribosomal subunit. The cofactor is Zn(2+).

The chain is Small ribosomal subunit protein eS31 from Nanoarchaeum equitans (strain Kin4-M).